We begin with the raw amino-acid sequence, 570 residues long: BRICHOS domain-containing protein C09F5.1 (570 aa).

Topologically, residues 1-288 are cytoplasmic; the sequence is MVVEQIEVIE…YTPELLRSLC (288 aa). Polar residues-rich tracts occupy residues 93–107 and 228–246; these read SGAT…SGDS and TSTL…SLVS. Disordered regions lie at residues 93–116 and 218–248; these read SGAT…GADR and SSWD…VSRE. A helical membrane pass occupies residues 289–309; sequence CILLLLLLLLFLMFIIFNAIF. Topologically, residues 310–570 are extracellular; that stretch reads NRYAVSEFLL…RKSINNATLV (261 aa). The region spanning 369–461 is the BRICHOS domain; the sequence is TAVDFNTGYV…IDDCEGAQWY (93 aa). Cys-395 and Cys-455 are joined by a disulfide.

It localises to the membrane. The protein is BRICHOS domain-containing protein C09F5.1 of Caenorhabditis elegans.